The sequence spans 309 residues: Metal ABC transporter substrate-binding lipoprotein SsaB (309 aa).

The first 19 residues, 1-19, serve as a signal peptide directing secretion; the sequence is MKKLGFLSLLLLAVCTLFA. Residue Cys-20 is the site of N-palmitoyl cysteine attachment. Cys-20 carries the S-diacylglycerol cysteine lipid modification. His-67, His-139, Glu-205, and Asp-280 together coordinate a divalent metal cation.

It belongs to the bacterial solute-binding protein 9 family. Lipoprotein receptor antigen (Lrai) subfamily. In terms of assembly, homodimer and homotrimer.

The protein resides in the cell membrane. Functionally, part of an ATP-binding cassette (ABC) transport system involved in metal import. Binds a metal with high affinity and specificity and delivers it to the membrane permease for translocation into the cytoplasm. Also acts as an adhesin which is involved on adherence to extracellular matrix. It is an important factor in the pathogenesis and infection. May contribute to the formation and accumulation of dental plaque. This chain is Metal ABC transporter substrate-binding lipoprotein SsaB (ssaB), found in Streptococcus sanguinis.